Reading from the N-terminus, the 106-residue chain is Putative membrane protein insertion efficiency factor (106 aa).

This sequence belongs to the UPF0161 family.

Its subcellular location is the cell inner membrane. Could be involved in insertion of integral membrane proteins into the membrane. The sequence is that of Putative membrane protein insertion efficiency factor from Acinetobacter baylyi (strain ATCC 33305 / BD413 / ADP1).